The sequence spans 224 residues: Orotate phosphoribosyltransferase (224 aa).

5-phospho-alpha-D-ribose 1-diphosphate contacts are provided by residues Lys-26, 73 to 74 (YK), Arg-100, Lys-101, Lys-104, His-106, and 127 to 135 (EDVTTAGTS). Orotate contacts are provided by Thr-131 and Arg-160.

The protein belongs to the purine/pyrimidine phosphoribosyltransferase family. PyrE subfamily. In terms of assembly, homodimer. Mg(2+) is required as a cofactor.

It catalyses the reaction orotidine 5'-phosphate + diphosphate = orotate + 5-phospho-alpha-D-ribose 1-diphosphate. It participates in pyrimidine metabolism; UMP biosynthesis via de novo pathway; UMP from orotate: step 1/2. Its function is as follows. Catalyzes the transfer of a ribosyl phosphate group from 5-phosphoribose 1-diphosphate to orotate, leading to the formation of orotidine monophosphate (OMP). This is Orotate phosphoribosyltransferase from Clostridium acetobutylicum (strain ATCC 824 / DSM 792 / JCM 1419 / IAM 19013 / LMG 5710 / NBRC 13948 / NRRL B-527 / VKM B-1787 / 2291 / W).